The following is a 651-amino-acid chain: Altered inheritance of mitochondria protein 21 (651 aa).

Residues 1 to 85 (MPSEVTPKVP…LQRPVRRSTT (85 aa)) are disordered. Positions 9–19 (VPERPSRRKTS) are enriched in basic and acidic residues. Thr-18 is subject to Phosphothreonine. Ser-36 carries the phosphoserine modification. Thr-58 carries the post-translational modification Phosphothreonine. At Ser-70 the chain carries Phosphoserine. Thr-85 carries the post-translational modification Phosphothreonine. Residue Ser-104 is modified to Phosphoserine. Residues 110–119 (NIHNVSRKKS) are compositionally biased toward basic residues. 2 disordered regions span residues 110–522 (NIHN…EKIE) and 549–651 (IDTT…FHSL). Composition is skewed to polar residues over residues 133 to 149 (QNGQRSASDNKTSTNPS) and 164 to 178 (SAISPSNLVNKSNNE). The segment covering 179–213 (VTEHSDSEDLTEKQKVHAALDNEAGDRSHFEEKLI) has biased composition (basic and acidic residues). 3 positions are modified to phosphoserine: Ser-183, Ser-206, and Ser-231. Residues 243–272 (SDDKAEKFTKHPESSLEELQKHQEQQEEKI) are compositionally biased toward basic and acidic residues. Position 277 is a phosphothreonine (Thr-277). Residue Ser-284 is modified to Phosphoserine. Positions 296-323 (EVNSQPQGPSDTETVIAATSSNVPSQIA) are enriched in polar residues. Ser-324 carries the phosphoserine modification. Composition is skewed to basic and acidic residues over residues 339–361 (KKDFEAHVQKEELPNTQEKRVSE) and 372–383 (EESKIPKIPSER). Positions 383–396 (RPKRRAPPPVPKKP) are interaction with SH3 domain of ABP1. Composition is skewed to polar residues over residues 414-427 (DLHNNGNSSATTAS) and 437-452 (SSITSDTTKADFTSKL). Residues 471 to 482 (LEKKLSSPDTES) show a composition bias toward basic and acidic residues. The span at 501–512 (RRGRGPRGRKLP) shows a compositional bias: basic residues. Thr-552 carries the phosphothreonine modification. The segment covering 556 to 567 (QAERALDEKEKL) has biased composition (basic and acidic residues). The segment covering 575 to 586 (PLSQLPQTNTVG) has biased composition (polar residues). Phosphoserine is present on residues Ser-592, Ser-595, Ser-597, Ser-599, Ser-639, Ser-643, Ser-647, and Ser-650. Polar residues predominate over residues 594 to 605 (ESLSPSEAITNR). Over residues 639–651 (SALHSEEASFHSL) the composition is skewed to basic and acidic residues.

This sequence belongs to the AIM21 family. In terms of assembly, interacts with ribosomes. Interacts with ABP1.

It is found in the cytoplasm. It localises to the cytoskeleton. Its subcellular location is the actin patch. Involved in mitochondrial migration along actin filaments. The protein is Altered inheritance of mitochondria protein 21 (AIM21) of Saccharomyces cerevisiae (strain RM11-1a) (Baker's yeast).